The chain runs to 336 residues: Anthranilate phosphoribosyltransferase (336 aa).

Residues glycine 80, glycine 83–aspartate 84, threonine 88, asparagine 90–threonine 93, lysine 108–serine 116, and serine 120 each bind 5-phospho-alpha-D-ribose 1-diphosphate. Glycine 80 contacts anthranilate. Serine 92 is a Mg(2+) binding site. Residue asparagine 111 coordinates anthranilate. Arginine 166 provides a ligand contact to anthranilate. Residues aspartate 224 and glutamate 225 each coordinate Mg(2+).

Belongs to the anthranilate phosphoribosyltransferase family. As to quaternary structure, homodimer. The cofactor is Mg(2+).

It carries out the reaction N-(5-phospho-beta-D-ribosyl)anthranilate + diphosphate = 5-phospho-alpha-D-ribose 1-diphosphate + anthranilate. Its pathway is amino-acid biosynthesis; L-tryptophan biosynthesis; L-tryptophan from chorismate: step 2/5. Catalyzes the transfer of the phosphoribosyl group of 5-phosphorylribose-1-pyrophosphate (PRPP) to anthranilate to yield N-(5'-phosphoribosyl)-anthranilate (PRA). The sequence is that of Anthranilate phosphoribosyltransferase from Caldicellulosiruptor saccharolyticus (strain ATCC 43494 / DSM 8903 / Tp8T 6331).